A 604-amino-acid polypeptide reads, in one-letter code: Aspartate--tRNA(Asp/Asn) ligase (604 aa).

Glu169 provides a ligand contact to L-aspartate. The segment at 193-196 (QLFK) is aspartate. Residue Arg215 coordinates L-aspartate. ATP-binding positions include 215–217 (RDE) and Gln224. His456 serves as a coordination point for L-aspartate. Glu490 contacts ATP. Residue Arg497 participates in L-aspartate binding. 542–545 (GWDR) serves as a coordination point for ATP. The segment at 571-604 (PLTGAPAPITAQQRKEAGVDAQPEPKQAEAEPEA) is disordered.

This sequence belongs to the class-II aminoacyl-tRNA synthetase family. Type 1 subfamily. In terms of assembly, homodimer.

Its subcellular location is the cytoplasm. It carries out the reaction tRNA(Asx) + L-aspartate + ATP = L-aspartyl-tRNA(Asx) + AMP + diphosphate. Its function is as follows. Aspartyl-tRNA synthetase with relaxed tRNA specificity since it is able to aspartylate not only its cognate tRNA(Asp) but also tRNA(Asn). Reaction proceeds in two steps: L-aspartate is first activated by ATP to form Asp-AMP and then transferred to the acceptor end of tRNA(Asp/Asn). The protein is Aspartate--tRNA(Asp/Asn) ligase of Micrococcus luteus (strain ATCC 4698 / DSM 20030 / JCM 1464 / CCM 169 / CCUG 5858 / IAM 1056 / NBRC 3333 / NCIMB 9278 / NCTC 2665 / VKM Ac-2230) (Micrococcus lysodeikticus).